The following is a 952-amino-acid chain: MAEGGAADLDTQRSDIATLLKTSLRKGDTWYLVDSRWFKQWKKYVGFDSWDKYQMGDQNVYPGPIDNSGLLKDGDAQSLKEHLIDELDYILLPTEGWNKLVSWYTLMEGQEPIARKVVEQGMFVKHCKVEVYLTELKLCENGNMNNVVTRRFSKADTIDTIEKEIRKIFNIPDEKEARLWNKYMSNTFEPLNKPDSTIQDAGLYQGQVLVIEQKNEDGTWPRGPSAPNVKNSNYCLPSYTAYKNYDYSEPGRNNEQPGLCGLSNLGNTCFMNSAIQCLSNTPPLTEYFLNDKYQEELNFDNPLGMRGEIAKSYAELIKQMWSGKFSYVTPRAFKTQVGRFAPQFSGYQQQDCQELLAFLLDGLHEDLNRIRKKPYIQLKDADGRPDKVVAEEAWENHLKRNDSIIVDIFHGLFKSTLVCPECAKISVTFDPFCYLTLPLPMKKERSLEVYLVRMDPLAKPMQYKVIVPKIGNILDLCTALSALSGVPADKMIVTDIYNHRFHRIFAMDENLSSIMERDDIYVFEININRTEDTEHVVIPVCLREKFRHSSYTHHTGSSLFGQPFLMAVPRNNTEDKLYNLLLLRMCRYVKMSTETEETDGPLRCCEDQNINGNGPNGIHEEGSPSEMETDEPDDESSQDQELPSENENSQSEDSVGGDNDSENGLCTEETCKGRLTGHKKRLFTFQFNNLGNTDINYIKDDTRHIRFDDRQLRLDERSFLALDWDPDLKKRYFDENAAEDFEKHESVEYKPPKRPFVKLKDCIELFTTKEKLGAEDPWYCPNCKEHQQATKKLDLWSLPPVLVVHLKRFSYSRYMRDKLDTLVDFPISDLDMSEFLINPNAGPCRYNLIAVSNHYGGMGGGHYTAFAKNKDDGKWYYFDDSSVSSASEDQIVSKAAYVLFYQRQDTFSGTGFFPLDRETKGASAATGVPLESDEDSNDNDNDLENENCMHTN.

At A2 the chain carries N-acetylalanine. The interval A2 to G223 is mediates interaction with SART3. One can recognise a DUSP domain in the interval A7–V118. One can recognise a USP domain in the interval C260–Q904. Catalysis depends on C269, which acts as the Nucleophile. T573 carries the phosphothreonine modification. The segment at E597–L665 is disordered. Residues M627–S644 are compositionally biased toward acidic residues. Residue H862 is the Proton acceptor of the active site. Positions S923 to N952 are disordered. A compositionally biased stretch (acidic residues) spans E931–N945. 2 positions are modified to phosphoserine: S932 and S936.

It belongs to the peptidase C19 family. As to quaternary structure, a homodimer structure has been reported; however it is unclear whether the protein form a homodimer in vivo. Identified in a complex with the COP9 signalosome complex (CSN). Interacts with SMAD1, SMAD2 and SMAD3; the interaction is direct. Forms a complex with SMURF2 and SMAD7. Interacts with TGFBR1. Interacts with SART3; the interaction is direct. May interact with RNF20 and RNF40. May interact with PRKN. Interacts with INCA1. Post-translationally, phosphorylated. Phosphorylation protects against ubiquitination and subsequent degradation by the proteasome. Ubiquitinated, leading to degradation by the proteasome. In terms of tissue distribution, highly expressed in testis and spleen, and at lower level in other tissues.

The protein localises to the cytoplasm. It is found in the nucleus. It localises to the mitochondrion. The catalysed reaction is Thiol-dependent hydrolysis of ester, thioester, amide, peptide and isopeptide bonds formed by the C-terminal Gly of ubiquitin (a 76-residue protein attached to proteins as an intracellular targeting signal).. Functionally, hydrolase that removes conjugated ubiquitin from target proteins and regulates various pathways such as the TGF-beta receptor signaling, NF-kappa-B and RNF41/NRDP1-PRKN pathways. Acts as a key regulator of TGF-beta receptor signaling pathway, but the precise mechanism is still unclear: according to a report, acts by promoting deubiquitination of monoubiquitinated R-SMADs (SMAD1, SMAD2 and/or SMAD3), thereby alleviating inhibition of R-SMADs and promoting activation of TGF-beta target genes. According to another reports, regulates the TGF-beta receptor signaling pathway by mediating deubiquitination and stabilization of TGFBR1, leading to an enhanced TGF-beta signal. Able to mediate deubiquitination of monoubiquitinated substrates, 'Lys-27'-, 'Lys-48'- and 'Lys-63'-linked polyubiquitin chains. May also regulate gene expression and/or DNA repair through the deubiquitination of histone H2B. Acts as an inhibitor of mitophagy by counteracting the action of parkin (PRKN): hydrolyzes cleavage of 'Lys-48'- and 'Lys-63'-linked polyubiquitin chains attached by parkin on target proteins such as MFN2, thereby reducing parkin's ability to drive mitophagy. Acts as an associated component of COP9 signalosome complex (CSN) and regulates different pathways via this association: regulates NF-kappa-B by mediating deubiquitination of NFKBIA and deubiquitinates substrates bound to VCP. Involved in endosome organization by mediating deubiquitination of SQSTM1: ubiquitinated SQSTM1 forms a molecular bridge that restrains cognate vesicles in the perinuclear region and its deubiquitination releases target vesicles for fast transport into the cell periphery. Acts as a negative regulator of antifungal immunity by mediating 'Lys-27'-linked deubiquitination of CARD9, thereby inactivating CARD9. The sequence is that of Ubiquitin carboxyl-terminal hydrolase 15 (Usp15) from Rattus norvegicus (Rat).